A 1475-amino-acid chain; its full sequence is Mediator of RNA polymerase II transcription subunit 1 (1475 aa).

The segment covering 1–10 has biased composition (polar residues); the sequence is MSGSNAKSSG. Disordered regions lie at residues 1–26, 616–644, 709–992, 1135–1166, 1184–1245, 1263–1354, and 1387–1475; these read MSGS…KNKQ, ETDP…KTSD, GVTA…VASG, QPQP…AGAS, NKTG…SKKA, KANS…RFDH, and PKLS…LAGE. 3 stretches are compositionally biased toward low complexity: residues 621-641, 711-729, and 738-782; these read SGSS…GSAK, TASS…ITGK, and KSTA…SGSS. 4 positions are modified to phosphoserine: Ser830, Ser834, Ser854, and Ser858. Composition is skewed to polar residues over residues 860-874 and 888-897; these read VYSS…NSPK and GKPSMSTLKS. A compositionally biased stretch (low complexity) spans 919-934; the sequence is TSSGPSASSGSSGATG. The segment covering 944–953 has biased composition (pro residues); that stretch reads APPPPPPIPP. 5 stretches are compositionally biased toward low complexity: residues 954–966, 973–989, 1143–1159, 1185–1225, and 1265–1276; these read LASS…SSQS, SSAS…TAGV, TSSC…SAGS, KTGS…TGST, and NSSGNLSSKLSG. Polar residues predominate over residues 1286–1296; sequence TKSNSTNSFQE. Composition is skewed to low complexity over residues 1334 to 1346 and 1399 to 1409; these read SGSV…GSMS and TSGRSTPSGSS. Composition is skewed to polar residues over residues 1415 to 1430 and 1442 to 1458; these read GTSS…STGL and SQSG…TAGT.

The protein belongs to the Mediator complex subunit 1 family. In terms of assembly, component of the Mediator complex.

The protein localises to the nucleus. Component of the Mediator complex, a coactivator involved in the regulated transcription of nearly all RNA polymerase II-dependent genes. Mediator functions as a bridge to convey information from gene-specific regulatory proteins to the basal RNA polymerase II transcription machinery. Mediator is recruited to promoters by direct interactions with regulatory proteins and serves as a scaffold for the assembly of a functional preinitiation complex with RNA polymerase II and the general transcription factors. Required for activated transcription of the MtnA, MtnB and MtnD genes. The polypeptide is Mediator of RNA polymerase II transcription subunit 1 (MED1) (Drosophila melanogaster (Fruit fly)).